The sequence spans 265 residues: Glutamate racemase (265 aa).

Substrate contacts are provided by residues 9-10 (DS) and 41-42 (YG). The Proton donor/acceptor role is filled by Cys-72. 73-74 (NT) provides a ligand contact to substrate. Cys-183 serves as the catalytic Proton donor/acceptor. Residue 184 to 185 (TH) participates in substrate binding.

This sequence belongs to the aspartate/glutamate racemases family.

The enzyme catalyses L-glutamate = D-glutamate. Its pathway is cell wall biogenesis; peptidoglycan biosynthesis. Provides the (R)-glutamate required for cell wall biosynthesis. This Lysinibacillus sphaericus (strain C3-41) protein is Glutamate racemase.